Here is a 430-residue protein sequence, read N- to C-terminus: MDCDIFLVGLNHRTAGVDVRERFALANHCDEEHWALPCTGAVSESIILSTCNRVEILAAGTGEVAEQVLRNWAGARKSDVEDLRPYVYVHKNLEAVRHLFSVASSLDSMVLGEPQILGQLKTAYRKAVKSRATGVILNRLLHKAFSVAKRVRTETAVASSAVSISYAAVELAKRIFGDMRAHKAMLVGAGEMAELAAMHLLQAGIADILVANRTLVRGQELAKQFNGHAIPFEDMPRHLLDVDIIITSTGSQEPIIRARDIRAALKIRKNRPMFFIDIAVPRDIDPDVNGLDNVYLYDIDDLKEVVEENLATRRDEAAKAAEIVNEEVVQFSRWLASLDMQPTIVDLIKKGQRAAEEELAKTLKRLGPVDDNTREALEAMAGALVRKLNHDPIMFLKHGGMSQEGNGPRISIMRRIFNLDKTGCIYSEEN.

Substrate-binding positions include 50-53 (TCNR), S108, 113-115 (EPQ), and Q119. The Nucleophile role is filled by C51. 188-193 (GAGEMA) contributes to the NADP(+) binding site.

This sequence belongs to the glutamyl-tRNA reductase family. As to quaternary structure, homodimer.

It carries out the reaction (S)-4-amino-5-oxopentanoate + tRNA(Glu) + NADP(+) = L-glutamyl-tRNA(Glu) + NADPH + H(+). Its pathway is porphyrin-containing compound metabolism; protoporphyrin-IX biosynthesis; 5-aminolevulinate from L-glutamyl-tRNA(Glu): step 1/2. Functionally, catalyzes the NADPH-dependent reduction of glutamyl-tRNA(Glu) to glutamate 1-semialdehyde (GSA). This is Glutamyl-tRNA reductase from Desulfovibrio desulfuricans (strain ATCC 27774 / DSM 6949 / MB).